The sequence spans 429 residues: Glutamate-1-semialdehyde 2,1-aminomutase 2 (429 aa).

Lys267 carries the N6-(pyridoxal phosphate)lysine modification.

The protein belongs to the class-III pyridoxal-phosphate-dependent aminotransferase family. HemL subfamily. In terms of assembly, homodimer. The cofactor is pyridoxal 5'-phosphate.

It localises to the cytoplasm. The catalysed reaction is (S)-4-amino-5-oxopentanoate = 5-aminolevulinate. It functions in the pathway porphyrin-containing compound metabolism; protoporphyrin-IX biosynthesis; 5-aminolevulinate from L-glutamyl-tRNA(Glu): step 2/2. The chain is Glutamate-1-semialdehyde 2,1-aminomutase 2 (gsaB) from Bacillus subtilis (strain 168).